A 62-amino-acid chain; its full sequence is Temporin-1PLa (62 aa).

The signal sequence occupies residues 1–22 (MFTSKKSLLLLFFLGTINLSLC). The propeptide occupies 23–45 (EEERDADEEERRDDPDEMNVEVE). Residue Ile-60 is modified to Isoleucine amide.

As to expression, expressed by the skin glands.

It is found in the secreted. In terms of biological role, antimicrobial activity against the Gram-positive bacterium S.aureus. This chain is Temporin-1PLa, found in Lithobates palustris (Pickerel frog).